A 702-amino-acid polypeptide reads, in one-letter code: Polyphosphate kinase (702 aa).

Asn-55 is a binding site for ATP. Arg-389 and Arg-419 together coordinate Mg(2+). His-449 (phosphohistidine intermediate) is an active-site residue. Positions 482, 578, and 606 each coordinate ATP.

The protein belongs to the polyphosphate kinase 1 (PPK1) family. Mg(2+) serves as cofactor. An intermediate of this reaction is the autophosphorylated ppk in which a phosphate is covalently linked to a histidine residue through a N-P bond.

The catalysed reaction is [phosphate](n) + ATP = [phosphate](n+1) + ADP. Catalyzes the reversible transfer of the terminal phosphate of ATP to form a long-chain polyphosphate (polyP). The chain is Polyphosphate kinase from Bacillus cereus (strain ATCC 14579 / DSM 31 / CCUG 7414 / JCM 2152 / NBRC 15305 / NCIMB 9373 / NCTC 2599 / NRRL B-3711).